The sequence spans 192 residues: Elongation factor P (192 aa).

Residues 133-157 are disordered; the sequence is EVTETTPGVKGDTAQGGDKPATLES.

Belongs to the elongation factor P family.

The protein localises to the cytoplasm. It participates in protein biosynthesis; polypeptide chain elongation. In terms of biological role, involved in peptide bond synthesis. Stimulates efficient translation and peptide-bond synthesis on native or reconstituted 70S ribosomes in vitro. Probably functions indirectly by altering the affinity of the ribosome for aminoacyl-tRNA, thus increasing their reactivity as acceptors for peptidyl transferase. This Salinibacter ruber (strain DSM 13855 / M31) protein is Elongation factor P.